A 370-amino-acid polypeptide reads, in one-letter code: Maturase K (370 aa).

Belongs to the intron maturase 2 family. MatK subfamily.

It is found in the plastid. It localises to the chloroplast. Its function is as follows. Usually encoded in the trnK tRNA gene intron. Probably assists in splicing its own and other chloroplast group II introns. The chain is Maturase K from Marchantia polymorpha (Common liverwort).